We begin with the raw amino-acid sequence, 136 residues long: Translation initiation factor 5A (136 aa).

A Hypusine modification is found at Lys36.

The protein belongs to the eIF-5A family.

It localises to the cytoplasm. Functionally, functions by promoting the formation of the first peptide bond. The protein is Translation initiation factor 5A (eIF5A) of Hyperthermus butylicus (strain DSM 5456 / JCM 9403 / PLM1-5).